The chain runs to 396 residues: Tyrosine--tRNA ligase (396 aa).

Position 36 (Tyr-36) interacts with L-tyrosine. The short motif at 41–50 (PTANSLHIGN) is the 'HIGH' region element. L-tyrosine is bound by residues Tyr-165 and Gln-169. Positions 225–229 (KMGKT) match the 'KMSKS' region motif. Lys-228 lines the ATP pocket. The S4 RNA-binding domain maps to 331–394 (TNLIDYLVET…KKSFLTIKTV (64 aa)).

The protein belongs to the class-I aminoacyl-tRNA synthetase family. TyrS type 1 subfamily. Homodimer.

It localises to the cytoplasm. The enzyme catalyses tRNA(Tyr) + L-tyrosine + ATP = L-tyrosyl-tRNA(Tyr) + AMP + diphosphate + H(+). Catalyzes the attachment of tyrosine to tRNA(Tyr) in a two-step reaction: tyrosine is first activated by ATP to form Tyr-AMP and then transferred to the acceptor end of tRNA(Tyr). The chain is Tyrosine--tRNA ligase from Mycoplasma genitalium (strain ATCC 33530 / DSM 19775 / NCTC 10195 / G37) (Mycoplasmoides genitalium).